The sequence spans 467 residues: Cysteine--tRNA ligase (467 aa).

Cys28 is a Zn(2+) binding site. A 'HIGH' region motif is present at residues 30 to 40 (PTVYNYIHVGN). Positions 212, 237, and 241 each coordinate Zn(2+). Residues 269–273 (KMSKS) carry the 'KMSKS' region motif. Lys272 lines the ATP pocket.

The protein belongs to the class-I aminoacyl-tRNA synthetase family. In terms of assembly, monomer. Zn(2+) is required as a cofactor.

It localises to the cytoplasm. It carries out the reaction tRNA(Cys) + L-cysteine + ATP = L-cysteinyl-tRNA(Cys) + AMP + diphosphate. This Oenococcus oeni (strain ATCC BAA-331 / PSU-1) protein is Cysteine--tRNA ligase.